Reading from the N-terminus, the 631-residue chain is Probable potassium transport system protein Kup 1 (631 aa).

The next 12 helical transmembrane spans lie at 17-37 (LALGALGVVFGDIGTSPLYAL), 55-75 (LSLIFWSLIIVVSFKYLMIIF), 101-121 (PLFYIVAIFGAGLLLGDGMLT), 140-160 (LYPYVLPIASVILVLLFSLQA), 166-186 (IGYLFGPLILIWFITIAILGI), 217-237 (FLLGGIFLVVTGGEALFADIG), 249-269 (FFIALPCLLLNYFGQGANLIV), 277-297 (PFFMIAPPWFYLPLIIIATVA), 338-358 (IYVPQINFILFIGTMAFCLAF), 370-390 (IAVNLEMLLVDAMVAYAAVSI), 395-415 (TFNVIFLFGLFLLIDLAFLGA), and 420-440 (FITGGWVPIVLAFVIAFIMYS).

Belongs to the HAK/KUP transporter (TC 2.A.72) family.

It localises to the cell inner membrane. The enzyme catalyses K(+)(in) + H(+)(in) = K(+)(out) + H(+)(out). In terms of biological role, transport of potassium into the cell. Likely operates as a K(+):H(+) symporter. The polypeptide is Probable potassium transport system protein Kup 1 (Legionella pneumophila (strain Corby)).